We begin with the raw amino-acid sequence, 348 residues long: UDP-rhamnose/UDP-galactose transporter 2 (348 aa).

The next 10 membrane-spanning stretches (helical) occupy residues 12–32 (AVSD…IIMA), 44–64 (FSFA…VGMV), 81–101 (LLWF…SLML), 104–124 (VGFY…MEWV), 133–153 (EVKA…VTDV), 160–180 (FICA…IGSL), 196–216 (APIQ…FLSG), 230–250 (LCIL…YLCI), 257–277 (SFQV…WLIF), and 286–306 (IAGM…VELE).

The protein belongs to the TPT transporter family. TPT (TC 2.A.7.9) subfamily.

It is found in the golgi apparatus membrane. Its function is as follows. Nucleotide-sugar transporter that transports UDP-rhamnose or UDP-galactose and UMP in a strict counter-exchange mode. The sequence is that of UDP-rhamnose/UDP-galactose transporter 2 from Arabidopsis thaliana (Mouse-ear cress).